The primary structure comprises 141 residues: Hemoglobin subunit alpha-A (141 aa).

Positions 1–141 (MLSASDKANV…VGLVLTAKYR (141 aa)) constitute a Globin domain. An O2-binding site is contributed by His58. His87 is a heme b binding site.

This sequence belongs to the globin family. In terms of assembly, there are three forms of hemoglobin in Sphenodon: A, A' and D. Hb A is a tetramer of two alpha-A and two beta-1, Hb A' is a tetramer of two alpha-a and two beta-2, Hb D is a tetramer of two alpha-D and two beta-2. In terms of tissue distribution, red blood cells.

Involved in oxygen transport from the lung to the various peripheral tissues. This Sphenodon punctatus (Tuatara) protein is Hemoglobin subunit alpha-A (HBAA).